Reading from the N-terminus, the 530-residue chain is Purine-cytosine permease FCY22 (530 aa).

Threonine 46 carries the post-translational modification Phosphothreonine. 12 consecutive transmembrane segments (helical) span residues methionine 96–glycine 116, valine 119–phenylalanine 139, phenylalanine 162–serine 182, cysteine 197–glycine 217, valine 220–isoleucine 240, glycine 263–alanine 283, isoleucine 298–alanine 318, alanine 345–leucine 365, valine 372–isoleucine 392, valine 396–phenylalanine 416, glycine 418–alanine 438, and leucine 463–glycine 483.

Belongs to the purine-cytosine permease (2.A.39) family.

Its subcellular location is the membrane. Probable purine-cytosine permease. The chain is Purine-cytosine permease FCY22 (FCY22) from Saccharomyces cerevisiae (strain ATCC 204508 / S288c) (Baker's yeast).